The primary structure comprises 370 residues: Ganglioside-induced differentiation-associated protein 1-like 1 (370 aa).

The GST N-terminal domain maps to 45–129 (ESLVLYHWTQ…YVERTFTGEH (85 aa)). The region spanning 177–344 (PKYATAEIRR…RLVKRKPPSF (168 aa)) is the GST C-terminal domain.

This sequence belongs to the GST superfamily.

This chain is Ganglioside-induced differentiation-associated protein 1-like 1 (Gdap1l1), found in Mus musculus (Mouse).